The primary structure comprises 332 residues: MMKKPVVIGLAVVVLAAVVAGGYWWYQSRQDNGLTLYGNVDIRTVNLSFRVGGRVESLAVDEGDAIKAGQVLGELDHKPYEIALMQAKAGVSVAQAQYDLMLAGYRDEEIAQAAAAVKQAQAAYDYAQNFYNRQQGLWKSRTISANDLENARSSRDQAQATLKSAQDKLRQYRSGNREQDIAQAKASLEQAQAQLAQAELNLQDSTLIAPSDGTLLTRAVEPGTVLNEGGTVFTVSLTRPVWVRAYVDERNLDQAQPGRKVLLYTDGRPNKPYHGQIGFVSPTAEFTPKTVETPDLRTDLVYRLRIVVTDADDALRQGMPVTVQFGDEAGHE.

The signal sequence occupies residues 1-16; sequence MMKKPVVIGLAVVVLA. The stretch at 108–209 forms a coiled coil; it reads EEIAQAAAAV…LNLQDSTLIA (102 aa).

This sequence belongs to the UPF0194 family.

Its subcellular location is the periplasm. The polypeptide is UPF0194 membrane protein YbhG (Escherichia coli O45:K1 (strain S88 / ExPEC)).